We begin with the raw amino-acid sequence, 125 residues long: Small ribosomal subunit protein uS12c (125 aa).

The protein belongs to the universal ribosomal protein uS12 family. In terms of assembly, part of the 30S ribosomal subunit.

Its subcellular location is the plastid. The protein resides in the chloroplast. Its function is as follows. With S4 and S5 plays an important role in translational accuracy. Located at the interface of the 30S and 50S subunits. This is Small ribosomal subunit protein uS12c (rps12) from Oltmannsiellopsis viridis (Marine flagellate).